The primary structure comprises 1833 residues: Protein TIC 214 (1833 aa).

6 helical membrane passes run 18-38 (IINS…FSIG), 67-87 (FIMG…HLAL), 90-110 (PHTI…WNNH), 127-147 (LSIQ…YFIL), 175-195 (VGWL…LVWI), and 218-238 (IFSI…PSPI). The disordered stretch occupies residues 254–301 (EETNLEIEKTSETKETKQEEEGFTEEDPSPSLFSEEKEDPDKIDETEK). 2 stretches are compositionally biased toward basic and acidic residues: residues 259-273 (EIEK…KQEE) and 292-301 (DPDKIDETEK).

It belongs to the TIC214 family. As to quaternary structure, part of the Tic complex.

The protein resides in the plastid. Its subcellular location is the chloroplast inner membrane. Involved in protein precursor import into chloroplasts. May be part of an intermediate translocation complex acting as a protein-conducting channel at the inner envelope. The chain is Protein TIC 214 from Spinacia oleracea (Spinach).